A 262-amino-acid polypeptide reads, in one-letter code: Aminoglycoside (3'') (9) adenylyltransferase (262 aa).

It catalyses the reaction streptomycin + ATP = 3''-O-adenylylstreptomycin + diphosphate. The enzyme catalyses spectinomycin + ATP = 9-O-adenylylspectinomycin + diphosphate. Mediates bacterial resistance to the antibiotics streptomycin and spectinomycin. This is Aminoglycoside (3'') (9) adenylyltransferase from Klebsiella pneumoniae.